A 265-amino-acid chain; its full sequence is Hydroxyethylthiazole kinase 2 (265 aa).

Met39 is a substrate binding site. Residues Lys115 and Thr168 each coordinate ATP. Gly195 provides a ligand contact to substrate.

This sequence belongs to the Thz kinase family. Requires Mg(2+) as cofactor.

It catalyses the reaction 5-(2-hydroxyethyl)-4-methylthiazole + ATP = 4-methyl-5-(2-phosphooxyethyl)-thiazole + ADP + H(+). It functions in the pathway cofactor biosynthesis; thiamine diphosphate biosynthesis; 4-methyl-5-(2-phosphoethyl)-thiazole from 5-(2-hydroxyethyl)-4-methylthiazole: step 1/1. Its function is as follows. Catalyzes the phosphorylation of the hydroxyl group of 4-methyl-5-beta-hydroxyethylthiazole (THZ). The protein is Hydroxyethylthiazole kinase 2 of Clostridium botulinum (strain Okra / Type B1).